The following is a 486-amino-acid chain: Argininosuccinate lyase (486 aa).

Belongs to the lyase 1 family. Argininosuccinate lyase subfamily.

Its subcellular location is the cytoplasm. It catalyses the reaction 2-(N(omega)-L-arginino)succinate = fumarate + L-arginine. It functions in the pathway amino-acid biosynthesis; L-arginine biosynthesis; L-arginine from L-ornithine and carbamoyl phosphate: step 3/3. This Acidovorax ebreus (strain TPSY) (Diaphorobacter sp. (strain TPSY)) protein is Argininosuccinate lyase.